Here is a 260-residue protein sequence, read N- to C-terminus: Glucosamine-6-phosphate deaminase (260 aa).

D67 serves as the catalytic Proton acceptor; for enolization step. D136 acts as the For ring-opening step in catalysis. H138 serves as the catalytic Proton acceptor; for ring-opening step. Catalysis depends on E143, which acts as the For ring-opening step.

This sequence belongs to the glucosamine/galactosamine-6-phosphate isomerase family. NagB subfamily.

The catalysed reaction is alpha-D-glucosamine 6-phosphate + H2O = beta-D-fructose 6-phosphate + NH4(+). The protein operates within amino-sugar metabolism; N-acetylneuraminate degradation; D-fructose 6-phosphate from N-acetylneuraminate: step 5/5. Catalyzes the reversible isomerization-deamination of glucosamine 6-phosphate (GlcN6P) to form fructose 6-phosphate (Fru6P) and ammonium ion. This chain is Glucosamine-6-phosphate deaminase, found in Arthrobacter sp. (strain FB24).